Reading from the N-terminus, the 358-residue chain is Transcription factor bHLH67 (358 aa).

Positions 125–176 (NMTLPSSTSSPLSAHSRRKRKINHLLPQEMTREKRKRRKTKPSKNNEEIENQ) are disordered. Over residues 127–137 (TLPSSTSSPLS) the composition is skewed to low complexity. A compositionally biased stretch (basic residues) spans 157 to 166 (EKRKRRKTKP). Residues 175–226 (NQRINHIAVERNRRRQMNEHINSLRALLPPSYIQRGDQASIVGGAINYVKVL) form the bHLH domain.

As to quaternary structure, homodimer. As to expression, expressed constitutively in roots, leaves, stems, and flowers.

Its subcellular location is the nucleus. The sequence is that of Transcription factor bHLH67 (BHLH67) from Arabidopsis thaliana (Mouse-ear cress).